The chain runs to 404 residues: Glucose-1-phosphate adenylyltransferase (404 aa).

Alpha-D-glucose 1-phosphate is bound by residues tyrosine 99, glycine 164, 179 to 180, and serine 197; that span reads EK.

Belongs to the bacterial/plant glucose-1-phosphate adenylyltransferase family.

It catalyses the reaction alpha-D-glucose 1-phosphate + ATP + H(+) = ADP-alpha-D-glucose + diphosphate. The protein operates within capsule biogenesis; capsule polysaccharide biosynthesis. It functions in the pathway glycan biosynthesis; glycogen biosynthesis. Functionally, involved in the biosynthesis of ADP-glucose, a building block, required in the biosynthesis of maltose-1-phosphate (M1P) and in the elongation reactions to produce linear alpha-1,4-glucans. Catalyzes the reaction between ATP and alpha-D-glucose 1-phosphate (G1P) to produce pyrophosphate and ADP-Glc. The protein is Glucose-1-phosphate adenylyltransferase of Mycobacterium leprae (strain Br4923).